A 105-amino-acid chain; its full sequence is Host transcription reprogramming factor 7 (105 aa).

Residues 1–19 (MKTKTIFQLVALFAIGATA) form the signal peptide. The C2H2-type zinc-finger motif lies at 69-95 (YWCRIGNCNAAFKSLAARCRHEKTAVH).

Its subcellular location is the secreted. The protein localises to the host nucleus. In terms of biological role, probable secreted effector that translocates into the nuclei of host cells to reprogram the expression of targeted genes by binding on effector binding elements in rice. The protein is Host transcription reprogramming factor 7 of Pyricularia oryzae (strain 70-15 / ATCC MYA-4617 / FGSC 8958) (Rice blast fungus).